A 917-amino-acid chain; its full sequence is Gamma-tubulin complex component 3 (917 aa).

It belongs to the TUBGCP family. In terms of assembly, gamma-tubulin small complex (Gamma TuSC) is a heterotetrameric complex which contains two molecules of gamma-tubulin, and one molecule each of Dgrip84 and Dgrip91. The gamma-tubulin in this complex binds preferentially to GDP over GTP.

It is found in the cytoplasm. The protein resides in the cytoskeleton. The protein localises to the microtubule organizing center. Its subcellular location is the centrosome. It localises to the perinuclear region. The polypeptide is Gamma-tubulin complex component 3 (Drosophila melanogaster (Fruit fly)).